The primary structure comprises 366 residues: S-adenosylmethionine:tRNA ribosyltransferase-isomerase (366 aa).

This sequence belongs to the QueA family. As to quaternary structure, monomer.

Its subcellular location is the cytoplasm. It catalyses the reaction 7-aminomethyl-7-carbaguanosine(34) in tRNA + S-adenosyl-L-methionine = epoxyqueuosine(34) in tRNA + adenine + L-methionine + 2 H(+). Its pathway is tRNA modification; tRNA-queuosine biosynthesis. Transfers and isomerizes the ribose moiety from AdoMet to the 7-aminomethyl group of 7-deazaguanine (preQ1-tRNA) to give epoxyqueuosine (oQ-tRNA). This Methylorubrum populi (strain ATCC BAA-705 / NCIMB 13946 / BJ001) (Methylobacterium populi) protein is S-adenosylmethionine:tRNA ribosyltransferase-isomerase.